Reading from the N-terminus, the 89-residue chain is Small ribosomal subunit protein uS15 (89 aa).

This sequence belongs to the universal ribosomal protein uS15 family. As to quaternary structure, part of the 30S ribosomal subunit. Forms a bridge to the 50S subunit in the 70S ribosome, contacting the 23S rRNA.

Functionally, one of the primary rRNA binding proteins, it binds directly to 16S rRNA where it helps nucleate assembly of the platform of the 30S subunit by binding and bridging several RNA helices of the 16S rRNA. In terms of biological role, forms an intersubunit bridge (bridge B4) with the 23S rRNA of the 50S subunit in the ribosome. This Mannheimia succiniciproducens (strain KCTC 0769BP / MBEL55E) protein is Small ribosomal subunit protein uS15.